Consider the following 1487-residue polypeptide: Chromosome partition protein MukB (1487 aa).

Gly-34 to Ser-41 lines the ATP pocket. 5 coiled-coil regions span residues Ser-297–Ala-426, Ala-460–Ser-666, Arg-781–Ala-806, Glu-836–Val-1111, and Val-1210–Ile-1266. The flexible hinge stretch occupies residues Pro-667–Arg-784.

It belongs to the SMC family. MukB subfamily. In terms of assembly, homodimerization via its hinge domain. Binds to DNA via its C-terminal region. Interacts, and probably forms a ternary complex, with MukE and MukF via its C-terminal region. The complex formation is stimulated by calcium or magnesium. Interacts with tubulin-related protein FtsZ.

It is found in the cytoplasm. Its subcellular location is the nucleoid. Its function is as follows. Plays a central role in chromosome condensation, segregation and cell cycle progression. Functions as a homodimer, which is essential for chromosome partition. Involved in negative DNA supercoiling in vivo, and by this means organize and compact chromosomes. May achieve or facilitate chromosome segregation by condensation DNA from both sides of a centrally located replisome during cell division. The chain is Chromosome partition protein MukB from Vibrio vulnificus (strain CMCP6).